Consider the following 1008-residue polypeptide: MSQSFPRNDTSSSSEDETDNYRSHIQIPSLDLANYRKQQKSTSKTNLAKAGKKLKNNKSVRFPDSYSPRDTIISNASTTNNSSSDSELEQDMVTGENSNLPNFNFSANQVHSPEYANEDDANDDSGEEEDTFEPPADFYASEGSDEDMEADNEGDNVEDKEEVVNEKEEIADDLHSKSSKTSRESKSFNAGTKNSRRSLNSLQRNETDVTDQLKRTTSTTSSSKRSNSDKRTGFKDILRKFALVDQQYPEAPSNRESEDLGEPQPSRSDTFLGNVLSMAGESGGLVPGATHFSREKTIDEEEEVGFEDEDSDLIEMKKLDFAQLSNEAQNLISTHVPDLANKLPEGTSSDQQLDYSDTSASNLIKNDEETGNEATKKDDEFYTPNPDYFIRGDINNENDADDYLMLDEHMDDIAPPKRVQAGVLSSLLKLYQNPQEQQSSSSLTSKSTYGGNTLADDSNYSYSDPKAASTLDFTKLKNDFKNGPKRMANKIPGRKHGAQKQDTQDESAQKYYDEDGNEIAAPNLPSFHNAKPKAPKKIAAAGKVPSKVHKKLKEHKRQQDQQLRITVHIADILHRQRFIMRMCKALMMFGAPTHRLEEYMTLTSRVLEIDGQFVYFPGCMIVSFGDASTRTSEVHLVRCAQGLNLSKLSDTHRIYKGVIHDILPVDEASTQLEELLKKKNRYSPWLCVFLYGLGSSMVCPFAFNGGWYDVPIAFGVGLCVGYLQFFVSSKSNLYSSVFEVTASIVVTFIARAIGSIHDGEYFCFSAIAQGSLALILPGYIILTGSLELQSRNIVAGSVRMFYAIIYSLFLGFGITLGASLYGWVDSNAISTTKCKNSIKQDEFKILFVPLFSACLGLINQARWRQLPIMIVIACAGYVGTFFAGKHKQFSEVTEFTACIGAFIVGILGNLYSRIGKGMAVAAMLPAIFVQVPSGIASQSTLLAGVESADKLTSSNSTTTDTSTASDSAGSLAFGATMVKVSIGISVGLFASALFVYPFGKKKTGLFSL.

3 disordered regions span residues 1–273, 342–384, and 477–506; these read MSQS…TFLG, KLPE…FYTP, and KNDFKNGPKRMANKIPGRKHGAQKQDTQDE. Low complexity predominate over residues 70-85; sequence DTIISNASTTNNSSSD. Positions 95–111 are enriched in polar residues; sequence GENSNLPNFNFSANQVH. Composition is skewed to acidic residues over residues 116–132 and 143–161; these read ANEDDANDDSGEEEDTF and GSDEDMEADNEGDNVEDKE. Residues 162–186 are compositionally biased toward basic and acidic residues; sequence EVVNEKEEIADDLHSKSSKTSRESK. Over residues 188–204 the composition is skewed to polar residues; that stretch reads FNAGTKNSRRSLNSLQR. A compositionally biased stretch (basic and acidic residues) spans 205–214; sequence NETDVTDQLK. Low complexity predominate over residues 215-225; sequence RTTSTTSSSKR. Basic and acidic residues predominate over residues 226 to 239; sequence SNSDKRTGFKDILR. Positions 346 to 364 are enriched in polar residues; the sequence is GTSSDQQLDYSDTSASNLI. The span at 483-498 shows a compositional bias: basic residues; sequence GPKRMANKIPGRKHGA. 10 consecutive transmembrane segments (helical) span residues 683–703, 707–727, 736–756, 762–782, 800–820, 838–858, 866–886, 892–912, 917–937, and 978–998; these read SPWLCVFLYGLGSSMVCPFAF, WYDVPIAFGVGLCVGYLQFFV, SVFEVTASIVVTFIARAIGSI, FCFSAIAQGSLALILPGYIIL, MFYAIIYSLFLGFGITLGASL, IKQDEFKILFVPLFSACLGLI, LPIMIVIACAGYVGTFFAGKH, VTEFTACIGAFIVGILGNLYS, GMAVAAMLPAIFVQVPSGIAS, and VKVSIGISVGLFASALFVYPF.

Belongs to the ThrE exporter (TC 2.A.79) family.

The protein localises to the membrane. The polypeptide is Pheromone-regulated membrane protein 10 (Debaryomyces hansenii (strain ATCC 36239 / CBS 767 / BCRC 21394 / JCM 1990 / NBRC 0083 / IGC 2968) (Yeast)).